The following is a 431-amino-acid chain: Gamma-glutamyl phosphate reductase (431 aa).

Belongs to the gamma-glutamyl phosphate reductase family.

It is found in the cytoplasm. The enzyme catalyses L-glutamate 5-semialdehyde + phosphate + NADP(+) = L-glutamyl 5-phosphate + NADPH + H(+). The protein operates within amino-acid biosynthesis; L-proline biosynthesis; L-glutamate 5-semialdehyde from L-glutamate: step 2/2. In terms of biological role, catalyzes the NADPH-dependent reduction of L-glutamate 5-phosphate into L-glutamate 5-semialdehyde and phosphate. The product spontaneously undergoes cyclization to form 1-pyrroline-5-carboxylate. The polypeptide is Gamma-glutamyl phosphate reductase (Acaryochloris marina (strain MBIC 11017)).